The following is a 199-amino-acid chain: Inner membrane protein E199L (199 aa).

Residues 150-170 (INVMNHPFLTLILIILILIII) form a helical membrane-spanning segment.

The protein belongs to the asfivirus E199L family. In terms of assembly, interacts with host PYCR2; this interaction results in autophagy activation. Post-translationally, contains intramolecular disulfide bonds.

The protein localises to the virion membrane. The protein resides in the host membrane. In terms of biological role, essential for viral fusion with host endosomal membrane and core release. Not required for virus morphogenesis and egress. Induces complete autophagy through the interaction with and down-regulation of host PYCR2. This Ornithodoros (relapsing fever ticks) protein is Inner membrane protein E199L.